Consider the following 270-residue polypeptide: Cyclohexanol dehydrogenase (270 aa).

NAD(+) is bound by residues Arg-19, Asp-40, Asp-78, Val-79, Asn-105, Tyr-176, Lys-180, Ile-209, and Thr-211. The active-site Proton acceptor is Tyr-176.

It belongs to the short-chain dehydrogenases/reductases (SDR) family. As to quaternary structure, homodimer.

The protein resides in the cytoplasm. The catalysed reaction is cyclohexanol + NAD(+) = cyclohexanone + NADH + H(+). Activity is enhanced by the addition of Ba(2+) and Mg(2+), but inhibited by the addition of Al(3+), Ca(2+), Co(2+), Cu(2+), Mn(2+) and Zn(2+). In terms of biological role, catalyzes the oxidation of cyclohexanol to cyclohexanone. Can also use a broad range of other alcohols, including trans-cyclohexane-1,2-diol, trans-cyclopentane-1,2-diol, cyclopentanol, hexane-1,2-diol, ethanol, 1-propanol, 1-butanol, 1-pentanol and 1-hexanol. The chain is Cyclohexanol dehydrogenase from Rhodococcus sp. (strain TK6).